Reading from the N-terminus, the 352-residue chain is GTPase Obg (352 aa).

One can recognise an Obg domain in the interval 1–159 (MHFLDQAKIF…MYVWLRLKLL (159 aa)). Residues 122–142 (DGGRGNASYKTSTNRAPRQHG) form a disordered region. Residues 160–328 (ADAGLVGLPN…LLDAVLEYLP (169 aa)) enclose the OBG-type G domain. Residues 166–173 (GLPNAGKS), 191–195 (FTTLR), 212–215 (DIPG), 280–283 (NKID), and 309–311 (SGA) contribute to the GTP site. Mg(2+) contacts are provided by serine 173 and threonine 193.

Belongs to the TRAFAC class OBG-HflX-like GTPase superfamily. OBG GTPase family. As to quaternary structure, monomer. Mg(2+) serves as cofactor.

The protein localises to the cytoplasm. In terms of biological role, an essential GTPase which binds GTP, GDP and possibly (p)ppGpp with moderate affinity, with high nucleotide exchange rates and a fairly low GTP hydrolysis rate. Plays a role in control of the cell cycle, stress response, ribosome biogenesis and in those bacteria that undergo differentiation, in morphogenesis control. The sequence is that of GTPase Obg from Novosphingobium aromaticivorans (strain ATCC 700278 / DSM 12444 / CCUG 56034 / CIP 105152 / NBRC 16084 / F199).